We begin with the raw amino-acid sequence, 347 residues long: Olfactory receptor 13C3 (347 aa).

Residues 1–55 (MIVQLICTVCFLAVNTFHVRSSFDFLKADDMGEINQTLVSEFLLLGLSGYPKIEI) lie on the Extracellular side of the membrane. An N-linked (GlcNAc...) asparagine glycan is attached at Asn-35. Residues 56-76 (VYFALILVMYLVILIGNGVLI) form a helical membrane-spanning segment. Over 77–84 (IASIFDSH) the chain is Cytoplasmic. A helical transmembrane segment spans residues 85–105 (FHTPMYFFLGNLSFLDICYTS). Residues 106 to 129 (SSVPSTLVSLISKKRNISFSGCAV) are Extracellular-facing. An intrachain disulfide couples Cys-127 to Cys-219. The helical transmembrane segment at 130–150 (QMFFGFAMGSTECLLLGMMAF) threads the bilayer. Residues 151–169 (DRYVAICNPLRYPIILSKV) lie on the Cytoplasmic side of the membrane. The chain crosses the membrane as a helical span at residues 170 to 190 (AYVLMASVSWLSGGINSAVQT). The Extracellular portion of the chain corresponds to 191–227 (LLAMRLPFCGNNIINHFACEILAVLKLACADISLNII). The helical transmembrane segment at 228–247 (TMVISNMAFLVLPLMVIFFS) threads the bilayer. Residues 248-267 (YMFILYTILQMNSATGRRKA) lie on the Cytoplasmic side of the membrane. The chain crosses the membrane as a helical span at residues 268-288 (FSTCSAHLTVVIIFYGTIFFM). The Extracellular segment spans residues 289–307 (YAKPKSQDLIGEEKLQALD). Residues 308–328 (KLISLFYGVVTPMLNPILYSL) form a helical membrane-spanning segment. Residues 329-347 (RNKDVKAAVKYLLNKKPIH) are Cytoplasmic-facing.

This sequence belongs to the G-protein coupled receptor 1 family.

The protein resides in the cell membrane. Odorant receptor. The sequence is that of Olfactory receptor 13C3 (OR13C3) from Homo sapiens (Human).